Consider the following 412-residue polypeptide: Polyferredoxin protein MvhB (412 aa).

4Fe-4S ferredoxin-type domains lie at 1 to 29 (MIVV…VTPE), 30 to 57 (DVIY…IEDL), 67 to 96 (GRIV…LDEG), 97 to 127 (KVKK…VEGI), 138 to 166 (EGPI…LEKV), 168 to 197 (GVIE…ISGK), 207 to 236 (RKFE…PKSS), 238 to 266 (LTVE…LDVE), 276 to 305 (EGLV…VVTR), 314 to 345 (EKVD…LVDM), 357 to 386 (KRVQ…LTDE), and 385 to 412 (DEKV…LSLK). Positions 9, 12, 15, and 19 each coordinate [4Fe-4S] cluster. [4Fe-4S] cluster contacts are provided by cysteine 76, cysteine 79, cysteine 82, cysteine 86, cysteine 107, cysteine 110, cysteine 113, cysteine 117, cysteine 146, cysteine 149, cysteine 152, cysteine 156, cysteine 177, cysteine 180, cysteine 183, cysteine 187, cysteine 216, cysteine 219, cysteine 222, cysteine 226, cysteine 246, cysteine 249, cysteine 252, and cysteine 256. Cysteine 325, cysteine 328, cysteine 331, cysteine 335, cysteine 366, cysteine 369, cysteine 372, cysteine 376, cysteine 394, cysteine 397, cysteine 400, and cysteine 404 together coordinate [4Fe-4S] cluster.

Requires [4Fe-4S] cluster as cofactor.

The sequence is that of Polyferredoxin protein MvhB (mvhB) from Methanothermobacter marburgensis (strain ATCC BAA-927 / DSM 2133 / JCM 14651 / NBRC 100331 / OCM 82 / Marburg) (Methanobacterium thermoautotrophicum).